A 260-amino-acid polypeptide reads, in one-letter code: Vesicle-associated membrane protein 7B (260 aa).

Residues 1 to 189 lie on the Cytoplasmic side of the membrane; that stretch reads MPIIYSLVAR…KCAMWWKNVK (189 aa). One can recognise a Longin domain in the interval 7-110; it reads LVARGSSVLA…GMNSDFSRTL (104 aa). The region spanning 125-186 is the v-SNARE coiled-coil homology domain; it reads TMSRTMAEID…KQLKCAMWWK (62 aa). A helical; Anchor for type IV membrane protein membrane pass occupies residues 190–210; the sequence is LMLVLGAIVLIIIFIIVMSYC. The Vesicular segment spans residues 211–260; that stretch reads DGFRSGSKCRSSPSSNSTPTPTPTETPTPTPTPTSTPTPSQLLETLLNQF. Residues 215–250 form a disordered region; that stretch reads SGSKCRSSPSSNSTPTPTPTETPTPTPTPTSTPTPS. Positions 230–246 are enriched in pro residues; that stretch reads TPTPTETPTPTPTPTST.

It belongs to the synaptobrevin family.

It localises to the cytoplasmic vesicle. The protein localises to the secretory vesicle membrane. It is found in the golgi apparatus. Its subcellular location is the trans-Golgi network membrane. The protein resides in the late endosome membrane. It localises to the lysosome membrane. The protein localises to the endoplasmic reticulum membrane. It is found in the phagosome membrane. Functionally, involved in the targeting and/or fusion of transport vesicles to their target membrane during transport of proteins from the early endosome to the lysosome. Required for heterotypic fusion of late endosomes with lysosomes and homotypic lysosomal fusion. This Dictyostelium discoideum (Social amoeba) protein is Vesicle-associated membrane protein 7B.